A 554-amino-acid polypeptide reads, in one-letter code: Glucose-6-phosphate isomerase (554 aa).

Glu359 serves as the catalytic Proton donor. Residues His390 and Lys518 contribute to the active site.

Belongs to the GPI family.

The protein localises to the cytoplasm. The enzyme catalyses alpha-D-glucose 6-phosphate = beta-D-fructose 6-phosphate. It participates in carbohydrate biosynthesis; gluconeogenesis. It functions in the pathway carbohydrate degradation; glycolysis; D-glyceraldehyde 3-phosphate and glycerone phosphate from D-glucose: step 2/4. Its function is as follows. Catalyzes the reversible isomerization of glucose-6-phosphate to fructose-6-phosphate. The polypeptide is Glucose-6-phosphate isomerase (Pseudomonas entomophila (strain L48)).